Reading from the N-terminus, the 1009-residue chain is Type VII secretion system accessory factor EsaA (1009 aa).

The chain crosses the membrane as a helical span at residues 7–27 (IYALIVTLIIIIAIVSMIFFV). The span at 680-697 (TFAEEPQEPKIDKGKNDE) shows a compositional bias: basic and acidic residues. A disordered region spans residues 680–707 (TFAEEPQEPKIDKGKNDEFNTMSSNLDK). Transmembrane regions (helical) follow at residues 822-842 (ISPT…AYIF), 869-889 (VITS…VGLI), 903-923 (KFIL…TYLL), 928-948 (SIGM…MNNL), and 979-999 (IGLV…LNMF).

This sequence belongs to the EsaA family. As to quaternary structure, homodimer. Interacts with EssB.

Its subcellular location is the cell membrane. In terms of biological role, component of the type VII secretion system (Ess). Provides together with EssB and other components such as EssC and EssE a secretion platform across the cytoplasmic membrane in the host. In Staphylococcus aureus (strain COL), this protein is Type VII secretion system accessory factor EsaA.